A 121-amino-acid polypeptide reads, in one-letter code: Large ribosomal subunit protein bL12 (121 aa).

This sequence belongs to the bacterial ribosomal protein bL12 family. Homodimer. Part of the ribosomal stalk of the 50S ribosomal subunit. Forms a multimeric L10(L12)X complex, where L10 forms an elongated spine to which 2 to 4 L12 dimers bind in a sequential fashion. Binds GTP-bound translation factors.

Forms part of the ribosomal stalk which helps the ribosome interact with GTP-bound translation factors. Is thus essential for accurate translation. The protein is Large ribosomal subunit protein bL12 of Pseudomonas fluorescens (strain Pf0-1).